Consider the following 764-residue polypeptide: Irregular chiasm C-roughest protein (764 aa).

Positions 1–19 (MLHTMQLLLLATIVGMVRS) are cleaved as a signal peptide. Residues 20–533 (SPYTSYQNQR…QAKKSVSLLM (514 aa)) are Extracellular-facing. 5 Ig-like C2-type domains span residues 21 to 120 (PYTS…PAIR), 132 to 230 (PEAP…AKIR), 237 to 343 (PKVK…LDIS), 346 to 419 (PSFR…AEIS), and 430 to 530 (PAIG…KSVS). 5 cysteine pairs are disulfide-bonded: C49–C107, C155–C214, C281–C325, C367–C408, and C450–C508. N-linked (GlcNAc...) asparagine glycosylation is found at N211, N313, N393, N400, and N507. A helical transmembrane segment spans residues 534–556 (TIVGGISVVAFLLVLTILVVVYI). The Cytoplasmic segment spans residues 557–764 (KCKKRTKLPP…SSLLPPPTAV (208 aa)). Disordered regions lie at residues 640-660 (HQNQ…HHTQ) and 691-719 (NGLP…STTA). Polar residues predominate over residues 692–701 (GLPSLQSTTA). Low complexity predominate over residues 702–719 (SVVSSSPNGSCSNQSTTA).

Postembryonic expression is strong in the developing optic lobe and in the eye imaginal disk.

It is found in the membrane. Its function is as follows. Required for correct axonal pathway formation in the optic lobe and for programmed cell death in the developing retina. The sequence is that of Irregular chiasm C-roughest protein (rst) from Drosophila melanogaster (Fruit fly).